The primary structure comprises 330 residues: Ferredoxin--NADP reductase (330 aa).

FAD-binding residues include E35, Q43, Y48, V90, F123, D285, and T326.

This sequence belongs to the ferredoxin--NADP reductase type 2 family. Homodimer. It depends on FAD as a cofactor.

The enzyme catalyses 2 reduced [2Fe-2S]-[ferredoxin] + NADP(+) + H(+) = 2 oxidized [2Fe-2S]-[ferredoxin] + NADPH. In Streptococcus equi subsp. zooepidemicus (strain MGCS10565), this protein is Ferredoxin--NADP reductase.